The primary structure comprises 225 residues: MHIHDWPTNERPREKLLARGATALSDAELLAIFVGSGLRGQDAVQTARDLLHRHGPLRPLLDRPAKALERLPGLGPASACKLAAALELAHRHLMSALERGEALSDPPSVGRYFSQRLRARAYEVFAVLFLDNRHRAIAFEELFTGTIDGADIHPREVVRRALLHNAAAVIVGHNHPSGNPEPSEADRAVTKRLLDSLELVDIRLLDHFVIGDGRPVSLAERGWLE.

The region spanning alanine 102 to leucine 224 is the MPN domain. Residues histidine 173, histidine 175, and aspartate 186 each coordinate Zn(2+). The JAMM motif signature appears at histidine 173–aspartate 186.

It belongs to the UPF0758 family.

The sequence is that of UPF0758 protein XOO0462 from Xanthomonas oryzae pv. oryzae (strain MAFF 311018).